Here is a 666-residue protein sequence, read N- to C-terminus: Probable potassium transport system protein Kup (666 aa).

12 helical membrane passes run 16–36 (GFII…LYTM), 58–78 (ISLI…LVAL), 99–119 (TPWL…DGAL), 141–161 (IFQN…LLFA), 167–187 (TGVI…FLGI), 221–241 (IFIL…YSDL), 253–273 (WPFV…WILA), 292–312 (FTMH…QALI), 343–363 (TYIP…VLLF), 373–393 (YGLA…FFLI), 402–422 (VLLM…ASAV), and 424–444 (FMHG…IMII).

Belongs to the HAK/KUP transporter (TC 2.A.72) family.

It localises to the cell membrane. The enzyme catalyses K(+)(in) + H(+)(in) = K(+)(out) + H(+)(out). In terms of biological role, transport of potassium into the cell. Likely operates as a K(+):H(+) symporter. The chain is Probable potassium transport system protein Kup from Streptococcus agalactiae serotype III (strain NEM316).